We begin with the raw amino-acid sequence, 310 residues long: Endo-1,4-beta-xylanase B (310 aa).

The N-terminal stretch at 1–19 is a signal peptide; sequence MISLSSVAIALTTVVGALA. Positions 33–223 constitute a GH11 domain; it reads AITSSQTGTN…SSGSASMTVS (191 aa). The Nucleophile role is filled by Glu119. Glu210 functions as the Proton donor in the catalytic mechanism. Residues 218 to 227 are compositionally biased toward low complexity; that stretch reads ASMTVSAGSS. The disordered stretch occupies residues 218–274; the sequence is ASMTVSAGSSSSGGSGSGSGSGSGSGSGSGSQTTTAGSSTGTGTGSGSGSGSGGSGG. Positions 228 to 246 are enriched in gly residues; the sequence is SSGGSGSGSGSGSGSGSGS. Over residues 247–256 the composition is skewed to low complexity; the sequence is GSQTTTAGSS. Over residues 257-274 the composition is skewed to gly residues; that stretch reads TGTGTGSGSGSGSGGSGG. A CBM1 domain is found at 275–310; the sequence is NCAAQWGQCGGQGWNGPTCCSSGTCKASNQWYSQCL.

Belongs to the glycosyl hydrolase 11 (cellulase G) family.

The protein resides in the secreted. The catalysed reaction is Endohydrolysis of (1-&gt;4)-beta-D-xylosidic linkages in xylans.. It functions in the pathway glycan degradation; xylan degradation. Functionally, endo-1,4-beta-xylanase involved in the hydrolysis of xylan, a major structural heterogeneous polysaccharide found in plant biomass representing the second most abundant polysaccharide in the biosphere, after cellulose. Hydrolyzes birchwood xylan, beechwood xylan, and oat spelt xylan to produce short-chain xylooligosaccharides, xylopentaose, xylotriose, and xylobiose as the main products. In Penicillium oxalicum, this protein is Endo-1,4-beta-xylanase B (xynB).